We begin with the raw amino-acid sequence, 393 residues long: MGYYSLTEITAVQYAKDHGYFEEKANVICHEIGDGNLNYVFKLDDGEKSIIIKQALPYAKVVGESWPLSIKRATIESKALQIFAQYVPDYVPVVYSHDEELAITVIEDLSRLTITRKGLIDGEEYPLLSQHIGRFLAHVLFYTSDFGLQSEEKRILEGTFVNPDLCKITEDLVFTDPFGHYDTNDYEPDLQLVVDELWSDKTLKLKVAQYKYKFLTRKETLIHGDLHTGSIFSSPSETKVIDPEFATYGPFGFDIGQFIANLLLNALSREEEKRSVLFFHIEKTWSYFVETFTKLWIGEGVEAYTKEKQWLPIILQNIFTDAVGFAGCELIRRTIGLAHVADLDEIENKETRIQAKKQALSLGKELIKYESKSADIQLFRTLFQQTVSRGVKA.

ATP contacts are provided by residues Asn38, Lys53, and 107-109 (EDL). Position 225 (Asp225) interacts with substrate. ATP is bound at residue 242–244 (DPE). Position 332 (Arg332) interacts with substrate.

This sequence belongs to the methylthioribose kinase family. In terms of assembly, homodimer.

The catalysed reaction is 5-(methylsulfanyl)-D-ribose + ATP = 5-(methylsulfanyl)-alpha-D-ribose 1-phosphate + ADP + H(+). The protein operates within amino-acid biosynthesis; L-methionine biosynthesis via salvage pathway; S-methyl-5-thio-alpha-D-ribose 1-phosphate from S-methyl-5'-thioadenosine (hydrolase route): step 2/2. Catalyzes the phosphorylation of methylthioribose into methylthioribose-1-phosphate. The polypeptide is Methylthioribose kinase (Bacillus cereus (strain B4264)).